Reading from the N-terminus, the 454-residue chain is Alpha-1,3-mannosyl-glycoprotein 4-beta-N-acetylglucosaminyltransferase C (454 aa).

Residues 1–6 lie on the Cytoplasmic side of the membrane; it reads MRCHLK. The helical; Signal-anchor for type II membrane protein transmembrane segment at 7 to 24 threads the bilayer; sequence KWVVVAAGLSILTSLYVY. Residues 25–454 lie on the Lumenal side of the membrane; sequence MQRAQSGNLK…VWTVKEDKTI (430 aa). 2 N-linked (GlcNAc...) asparagine glycosylation sites follow: Asn58 and Asn189.

It belongs to the glycosyltransferase 54 family. Requires a divalent metal cation as cofactor.

Its subcellular location is the golgi apparatus membrane. The enzyme catalyses N(4)-{beta-D-GlcNAc-(1-&gt;2)-alpha-D-Man-(1-&gt;3)-[beta-D-GlcNAc-(1-&gt;2)-alpha-D-Man-(1-&gt;6)]-beta-D-Man-(1-&gt;4)-beta-D-GlcNAc-(1-&gt;4)-beta-D-GlcNAc}-L-asparaginyl-[protein] + UDP-N-acetyl-alpha-D-glucosamine = N(4)-{beta-D-GlcNAc-(1-&gt;2)-[beta-D-GlcNAc-(1-&gt;4)]-alpha-D-Man-(1-&gt;3)-[beta-D-GlcNAc-(1-&gt;2)-alpha-D-Man-(1-&gt;6)]-beta-D-Man-(1-&gt;4)-beta-D-GlcNAc-(1-&gt;4)-beta-D-GlcNAc}-L-asparaginyl-[protein] + UDP + H(+). The protein operates within protein modification; protein glycosylation. Glycosyltransferase that participates in the transfer of N-acetylglucosamine (GlcNAc) to the core mannose residues of N-linked glycans. Catalyzes the formation of the GlcNAcbeta1-4 branch on the GlcNAcbeta1-2Manalpha1-3 arm of the core structure of N-linked glycans. The polypeptide is Alpha-1,3-mannosyl-glycoprotein 4-beta-N-acetylglucosaminyltransferase C (mgat4c) (Danio rerio (Zebrafish)).